The primary structure comprises 370 residues: MQRLVLVSILLCANFSCYPDTFATPQRASIKALRNANLRRDESNHLTDLYQREENIQVTSNGHVQSPRFPNSYPRNLLLTWWLRSQEKTRIQLSFDHQFGLEEAENDICRYDFVEVEEVSESSTVVRGRWCGHKEIPPRITSRTNQIKITFKSDDYFVAKPGFKIYYSFVEDFQPEAASETNWESVTSSFSGVSYHSPSITDPTLTADALDKTVAEFDTVEDLLKHFNPVSWQDDLENLYLDTPHYRGRSYHDRKSKVDLDRLNDDVKRYSCTPRNHSVNLREELKLTNAVFFPRCLLVQRCGGNCGCGTVNWKSCTCSSGKTVKKYHEVLKFEPGHFKRRGKAKNMALVDIQLDHHERCDCICSSRPPR.

An N-terminal signal peptide occupies residues 1-23; the sequence is MQRLVLVSILLCANFSCYPDTFA. The region spanning 52–170 is the CUB domain; sequence REENIQVTSN…PGFKIYYSFV (119 aa). The cysteines at positions 109 and 131 are disulfide-linked. N-linked (GlcNAc...) asparagine glycosylation occurs at Asn-276. Disulfide bonds link Cys-302–Cys-360 and Cys-306–Cys-362.

Belongs to the PDGF/VEGF growth factor family. In terms of assembly, homodimer; disulfide-linked. Interacts with PDGFRB homodimers, and with heterodimers formed by PDGFRA and PDGFRB. Post-translationally, activated by proteolytic cleavage. Proteolytic removal of the N-terminal CUB domain releasing the core domain is necessary for unmasking the receptor-binding epitopes of the core domain. Cleavage after Arg-247 or Arg-249 by urokinase plasminogen activator gives rise to the active form. Expressed at high levels in developing heart, lung, kidney and some muscle derivatives. Moderately expressed in liver, brain and testis. In the kidney, localized to glomerular mesangial cells and vascular smooth muscle cells. Up-regulated in areas of renal fibrosis. In mice with unilateral ureteral obstruction, expressed in interstitial cells at day 4, with an increased to maximal expression at day 14.

It localises to the secreted. Its function is as follows. Growth factor that plays an essential role in the regulation of embryonic development, cell proliferation, cell migration, survival and chemotaxis. Potent mitogen for cells of mesenchymal origin. Plays an important role in wound healing. Has oncogenic potential and can induce tumor formation. Induces macrophage recruitment, increased interstitial pressure, and blood vessel maturation during angiogenesis. Can initiate events that lead to a mesangial proliferative glomerulonephritis, including influx of monocytes and macrophages and production of extracellular matrix. The chain is Platelet-derived growth factor D (Pdgfd) from Mus musculus (Mouse).